The primary structure comprises 147 residues: Microsomal glutathione S-transferase 2 (147 aa).

The next 3 membrane-spanning stretches (helical) occupy residues S6 to V26, V62 to L82, and G107 to A127.

In terms of assembly, homotrimer.

The protein resides in the endoplasmic reticulum membrane. Its subcellular location is the microsome membrane. The catalysed reaction is RX + glutathione = an S-substituted glutathione + a halide anion + H(+). It carries out the reaction 1-chloro-2,4-dinitrobenzene + glutathione = 2,4-dinitrophenyl-S-glutathione + chloride + H(+). The enzyme catalyses leukotriene C4 = leukotriene A4 + glutathione. It catalyses the reaction (5S)-hydroperoxy-(6E,8Z,11Z,14Z)-eicosatetraenoate + 2 glutathione = (5S)-hydroxy-(6E,8Z,11Z,14Z)-eicosatetraenoate + glutathione disulfide + H2O. With respect to regulation, each monomer binds on GSH molecule but only one subunit is catalytically active. Catalyzes several different glutathione-dependent reactions. Catalyzes the glutathione-dependent reduction of lipid hydroperoxides, such as 5-HPETE. Has glutathione transferase activity, toward xenobiotic electrophiles, such as 1-chloro-2, 4-dinitrobenzene (CDNB). Also catalyzes the conjugation of leukotriene A4 with reduced glutathione to form leukotriene C4 (LTC4). Involved in oxidative DNA damage induced by ER stress and anticancer agents by activating LTC4 biosynthetic machinery in nonimmune cells. The polypeptide is Microsomal glutathione S-transferase 2 (Mus musculus (Mouse)).